We begin with the raw amino-acid sequence, 159 residues long: Na(+)/H(+) antiporter subunit E1 (159 aa).

4 consecutive transmembrane segments (helical) span residues 1-21, 27-47, 60-80, and 101-121; these read MAIQFVINLLVSVIWLLVTNS, FVLGFILGLFLVYLLHRVLPG, LIITFLTELIKANFGVLKIIL, and WQLVLLSNLITLTPGTVVLGI.

Belongs to the CPA3 antiporters (TC 2.A.63) subunit E family. As to quaternary structure, may form a heterooligomeric complex that consists of seven subunits: mnhA1, mnhB1, mnhC1, mnhD1, mnhE1, mnhF1 and mnhG1.

It is found in the cell membrane. Mnh complex is a Na(+)/H(+) antiporter involved in Na(+) excretion. This is Na(+)/H(+) antiporter subunit E1 (mnhE1) from Staphylococcus epidermidis (strain ATCC 35984 / DSM 28319 / BCRC 17069 / CCUG 31568 / BM 3577 / RP62A).